A 198-amino-acid polypeptide reads, in one-letter code: tRNA (pseudouridine(54)-N(1))-methyltransferase (198 aa).

S-adenosyl-L-methionine contacts are provided by residues Leu130, Gly153, 176 to 181 (LSPLEL), and Cys186.

It belongs to the methyltransferase superfamily. TrmY family. Homodimer.

It is found in the cytoplasm. It carries out the reaction pseudouridine(54) in tRNA + S-adenosyl-L-methionine = N(1)-methylpseudouridine(54) in tRNA + S-adenosyl-L-homocysteine + H(+). In terms of biological role, specifically catalyzes the N1-methylation of pseudouridine at position 54 (Psi54) in tRNAs. In Methanococcus maripaludis (strain C5 / ATCC BAA-1333), this protein is tRNA (pseudouridine(54)-N(1))-methyltransferase.